A 154-amino-acid chain; its full sequence is uncharacterized protein (154 aa).

Disordered regions lie at residues 23-63 and 79-154; these read ERVG…VVLK and IKAA…DENE. Acidic residues predominate over residues 43–56; it reads PDEDGDHSDKEDEQ. Residue Ser50 is modified to Phosphoserine. Lys108 is modified (N6-acetyllysine). Residue Ser146 is modified to Phosphoserine.

This is an uncharacterized protein from Homo sapiens (Human).